The chain runs to 61 residues: MDPNCSCAAGGSCTCAGSCKCKECRCTSCKKSCCSCCPVGCAKCAQGCICKGASDKCSCCA.

The residue at position 1 (Met1) is an N-acetylmethionine. The segment at 1–29 (MDPNCSCAAGGSCTCAGSCKCKECRCTSC) is beta. Positions 5, 7, 13, 15, 19, 21, 24, 26, 29, 33, 34, 36, 37, 41, 44, 48, 50, and 57 each coordinate a divalent metal cation. The alpha stretch occupies residues 30–61 (KKSCCSCCPVGCAKCAQGCICKGASDKCSCCA). Phosphoserine is present on Ser58. A divalent metal cation is bound by residues Cys59 and Cys60.

Belongs to the metallothionein superfamily. Type 1 family. In terms of assembly, interacts with EOLA1.

Its function is as follows. Metallothioneins have a high content of cysteine residues that bind various heavy metals; these proteins are transcriptionally regulated by both heavy metals and glucocorticoids. The sequence is that of Metallothionein-2 (MT2A) from Canis lupus familiaris (Dog).